A 391-amino-acid polypeptide reads, in one-letter code: Terminal nucleotidyltransferase 5C (391 aa).

It belongs to the TENT family. Interacts with BCCIP and PABPC1; the interaction has no effect on TENT5C poly(A) polymerase function. Interacts with PLK4; this interaction leads to the TENT5C recruitment into the centrosome.

It localises to the nucleus. The protein localises to the cytoplasm. The protein resides in the cytoskeleton. Its subcellular location is the microtubule organizing center. It is found in the centrosome. It catalyses the reaction RNA(n) + ATP = RNA(n)-3'-adenine ribonucleotide + diphosphate. In terms of biological role, catalyzes the transfer of one adenosine molecule from an ATP to an mRNA poly(A) tail bearing a 3'-OH terminal group and enhances mRNA stability and gene expression. Can also elongate RNA oligos ending with uridine molecule, provided that the sequence is adenosine-rich. Mainly targets mRNAs encoding endoplasmic reticulum-targeted protein. Functionally, (Microbial infection) Seems to enhance replication of some viruses, including yellow fever virus, in response to type I interferon. This Homo sapiens (Human) protein is Terminal nucleotidyltransferase 5C.